A 343-amino-acid polypeptide reads, in one-letter code: MRN complex-interacting protein (343 aa).

The tract at residues 75–104 (EETVSASEEENVGHQQAGNVKQQEKSQPSE) is disordered. The span at 87-104 (GHQQAGNVKQQEKSQPSE) shows a compositional bias: polar residues. Phosphoserine occurs at positions 100 and 115. Disordered regions lie at residues 128-178 (SKQP…WGPQ), 193-212 (SPCLQENSADCSAGELRGPG), and 230-324 (AQFV…AQNP). The short motif at 148–151 (RKRK) is the Nuclear localization signal (NLS) element. The segment covering 193–202 (SPCLQENSAD) has biased composition (polar residues). The segment at 213 to 237 (KELWSPIQQVTATSSKWAQFVLPPR) is necessary for the association with the MRN complex. Basic and acidic residues predominate over residues 240 to 255 (SHVDSEQPRSLQRDPR).

This sequence belongs to the MRNIP family. In terms of assembly, associates with the MRE11-RAD50-NBN (MRN) damage-sensing complex; this association is constitutive. Interacts with MRE11. Interacts with NBN. Interacts with RAD50. Post-translationally, phosphorylated; phosphorylation is constitutive and occurs in the absence of any DNA-damaging stimulus. Phosphorylation on Ser-115 is necessary for its nuclear retention.

It localises to the nucleus. Its subcellular location is the nucleoplasm. Functionally, plays a role in the cellular response to DNA damage and the maintenance of genome stability through its association with the MRN damage-sensing complex. Promotes chromatin loading and activity of the MRN complex to facilitate subsequent ATM-mediated DNA damage response signaling and DNA repair. The protein is MRN complex-interacting protein of Homo sapiens (Human).